We begin with the raw amino-acid sequence, 426 residues long: Riboflavin biosynthesis protein PYRD, chloroplastic (426 aa).

The transit peptide at 1–61 (MQISCLPISI…SQTGFSNPVL (61 aa)) directs the protein to the chloroplast. Residues 72-194 (VDDSFYMRKC…RLKDAGIDVT (123 aa)) form the CMP/dCMP-type deaminase domain. His121 contributes to the Zn(2+) binding site. The Proton donor role is filled by Glu123. Zn(2+) is bound by residues Cys146 and Cys155.

Zn(2+) serves as cofactor.

The protein resides in the plastid. It localises to the chloroplast. It carries out the reaction 2,5-diamino-6-hydroxy-4-(5-phosphoribosylamino)-pyrimidine + H2O + H(+) = 5-amino-6-(5-phospho-D-ribosylamino)uracil + NH4(+). Its pathway is cofactor biosynthesis; riboflavin biosynthesis; 5-amino-6-(D-ribitylamino)uracil from GTP: step 2/4. Its function is as follows. Monofunctional pyrimidine deaminase involved in the riboflavin biosynthesis pathway. Also has a reductase domain that lacks catalytically essential substrate-binding residues. This Arabidopsis thaliana (Mouse-ear cress) protein is Riboflavin biosynthesis protein PYRD, chloroplastic (PYRD).